We begin with the raw amino-acid sequence, 462 residues long: Glycogen synthase 1 (462 aa).

An ADP-alpha-D-glucose-binding site is contributed by R6.

Belongs to the glycosyltransferase 1 family. Bacterial/plant glycogen synthase subfamily.

It catalyses the reaction [(1-&gt;4)-alpha-D-glucosyl](n) + ADP-alpha-D-glucose = [(1-&gt;4)-alpha-D-glucosyl](n+1) + ADP + H(+). It participates in glycan biosynthesis; glycogen biosynthesis. In terms of biological role, synthesizes alpha-1,4-glucan chains using ADP-glucose. This is Glycogen synthase 1 from Bradyrhizobium diazoefficiens (strain JCM 10833 / BCRC 13528 / IAM 13628 / NBRC 14792 / USDA 110).